The sequence spans 323 residues: Phosphomevalonate kinase (323 aa).

It belongs to the GHMP kinase family. In terms of assembly, homodimer. Requires Mg(2+) as cofactor.

The enzyme catalyses (R)-5-phosphomevalonate + ATP = (R)-5-diphosphomevalonate + ADP. Its pathway is isoprenoid biosynthesis; isopentenyl diphosphate biosynthesis via mevalonate pathway; isopentenyl diphosphate from (R)-mevalonate: step 2/3. In terms of biological role, catalyzes the phosphorylation of (R)-mevalonate 5-phosphate (MVAP) to (R)-mevalonate 5-diphosphate (MVAPP). Functions in the mevalonate (MVA) pathway leading to isopentenyl diphosphate (IPP), a key precursor for the biosynthesis of isoprenoid compounds such as archaeal membrane lipids. This Saccharolobus solfataricus (strain ATCC 35092 / DSM 1617 / JCM 11322 / P2) (Sulfolobus solfataricus) protein is Phosphomevalonate kinase.